Here is a 123-residue protein sequence, read N- to C-terminus: Thioredoxin domain-containing protein 17 (123 aa).

Ala-2 bears the N-acetylalanine mark. Residues 41–123 (SWCPDCVQAE…NLVEMLFSED (83 aa)) enclose the Thioredoxin domain. Catalysis depends on nucleophile residues Cys-43 and Cys-46. Cys-43 and Cys-46 are disulfide-bonded.

The protein belongs to the thioredoxin family. Interacts with TRXR1 and DYNLL1/DNCL1. In terms of processing, the oxidized protein is reduced by TRXR1. In terms of tissue distribution, ubiquitously expressed in cell lines.

The protein localises to the cytoplasm. In terms of biological role, disulfide reductase. May participate in various redox reactions through the reversible oxidation of its active center dithiol to a disulfide and catalyze dithiol-disulfide exchange reactions. Modulates TNF-alpha signaling and NF-kappa-B activation. Has peroxidase activity and may contribute to the elimination of cellular hydrogen peroxide. The sequence is that of Thioredoxin domain-containing protein 17 (TXNDC17) from Homo sapiens (Human).